Consider the following 475-residue polypeptide: Peripherin (475 aa).

Positions 1–42 (MPSSASMSHHHSSGLRSSISSTSYRRTFGPPPSLSPGAFSYS) are disordered. Residues 1 to 103 (MPSSASMSHH…FLATRSNEKQ (103 aa)) are head. The span at 14–26 (GLRSSISSTSYRR) shows a compositional bias: low complexity. At Y24 the chain carries 3'-nitrotyrosine. A phosphoserine mark is found at S35 and S57. S66 carries the post-translational modification Phosphoserine; by PKB/AKT1. The region spanning 101 to 411 (EKQELQELND…KLLEGEESRI (311 aa)) is the IF rod domain. Residues 104-136 (ELQELNDRFANFIEKVRFLEQQNAALRGELSQA) form a coil 1A region. The segment at 137–147 (RGQEPARADQL) is linker 1. Residues 148–243 (CQQELRELRR…KLHEEELRDL (96 aa)) form a coil 1B region. The interval 244–266 (QVSVESQQVQQVEVEATVKPELT) is linker 2. The interval 267–409 (AALRDIRAQY…YRKLLEGEES (143 aa)) is coil 2. A 3'-nitrotyrosine modification is found at Y383. The segment at 410–475 (RISVPVHSFA…DLDKSSIHSY (66 aa)) is tail. The segment at 453–475 (EKVVTESQKEQHSDLDKSSIHSY) is disordered. Residue Y475 is modified to Phosphotyrosine.

The protein belongs to the intermediate filament family. In terms of assembly, forms homodimers (in vitro). Homopolymerizes into a filamentous network (in vitro). Forms heterodimers with NEFL, NEFM or NEFH (in vitro). Interacts with DST (via C-terminus). Interacts with RAB7A; the interaction is direct. Interacts with PRKCE (via phorbol-ester/DAG-type 2 domain). Post-translationally, phosphorylated; phosphorylation increases after nerve injury in regenerating neurons. As to expression, expressed in the sciatic nerve and at very low levels in the central nervous system (at protein level). Expressed in the spinal cord, in the sciatic nerve at the level of the dorsal root ganglion and in trigeminal nerves (at protein level). Expressed in the cranial nerves in the hindbrain, including the sensory and motor trigeminal neurons, the mesencephalic trigeminal neurons, the spinal trigeminal neurons, and in the facial nerve (at protein level). Expressed in the cerebellum, with expression in the inferior cerebellar peduncle and the lateral deep cerebellar nucleus (at protein level). Expressed in vestibulocochlear neurons, such as the anteroventral cochlear nucleus, the dorsal cochlear nucleus, the superficial granule cell layer and the granule cell lamina (at protein level). Expressed in glossopharyngeal, vagal and hypoglossal neurons (at protein level). Expressed in peripheral sensory neurons, in the dorsal root ganglia and the spinal cord, and to a lower extent in motor neurons. Expressed in the optic tract of the central nervous system, especially in the lateral geniculate nucleus and the superior colliculus. Expressed in neurons of the pineal stalk in the cortex. Expressed in the spinal trigeminal tract of the midbrain, in the medulla and in the medial cerebellar peduncle.

Its subcellular location is the cytoplasm. The protein resides in the cytoskeleton. It is found in the cell projection. The protein localises to the axon. It localises to the perikaryon. Class-III neuronal intermediate filament protein. May form an independent structural network without the involvement of other neurofilaments or may cooperate with the neuronal intermediate filament proteins NEFL, NEFH, NEFM and INA to form filamentous networks. Assembly of the neuronal intermediate filaments may be regulated by RAB7A. Plays a role in the development of unmyelinated sensory neurons. May be involved in axon elongation and axon regeneration after injury. Inhibits neurite extension in type II spiral ganglion neurons in the cochlea. The sequence is that of Peripherin (Prph) from Mus musculus (Mouse).